We begin with the raw amino-acid sequence, 186 residues long: Guanylate kinase (186 aa).

One can recognise a Guanylate kinase-like domain in the interval 5–183 (GNLTVLTGPS…AFKEIEGFMG (179 aa)). 12–19 (GPSGVGKG) provides a ligand contact to ATP.

The protein belongs to the guanylate kinase family.

The protein localises to the cytoplasm. It carries out the reaction GMP + ATP = GDP + ADP. In terms of biological role, essential for recycling GMP and indirectly, cGMP. The polypeptide is Guanylate kinase (Prochlorococcus marinus (strain NATL2A)).